A 99-amino-acid chain; its full sequence is Large ribosomal subunit protein uL23 (99 aa).

This sequence belongs to the universal ribosomal protein uL23 family. In terms of assembly, part of the 50S ribosomal subunit. Contacts protein L29, and trigger factor when it is bound to the ribosome.

Functionally, one of the early assembly proteins it binds 23S rRNA. One of the proteins that surrounds the polypeptide exit tunnel on the outside of the ribosome. Forms the main docking site for trigger factor binding to the ribosome. The chain is Large ribosomal subunit protein uL23 from Francisella tularensis subsp. holarctica (strain OSU18).